The primary structure comprises 341 residues: Probable sulfurtransferase (341 aa).

Zn(2+) contacts are provided by C40, C42, C58, and C61. G88 contributes to the ATP binding site. Positions 176 and 179 each coordinate [4Fe-4S] cluster. ATP is bound by residues R183 and G202. C267 provides a ligand contact to [4Fe-4S] cluster. 4 residues coordinate Zn(2+): C316, C319, C328, and C331.

Belongs to the TtcA family. It depends on [4Fe-4S] cluster as a cofactor. Requires Mg(2+) as cofactor.

The sequence is that of Probable sulfurtransferase from Methanocaldococcus jannaschii (strain ATCC 43067 / DSM 2661 / JAL-1 / JCM 10045 / NBRC 100440) (Methanococcus jannaschii).